We begin with the raw amino-acid sequence, 315 residues long: 4-hydroxy-3-methylbut-2-enyl diphosphate reductase (315 aa).

Cys12 is a [4Fe-4S] cluster binding site. (2E)-4-hydroxy-3-methylbut-2-enyl diphosphate-binding residues include His41 and His74. Residues His41 and His74 each coordinate dimethylallyl diphosphate. Isopentenyl diphosphate contacts are provided by His41 and His74. Position 96 (Cys96) interacts with [4Fe-4S] cluster. Residue His124 coordinates (2E)-4-hydroxy-3-methylbut-2-enyl diphosphate. His124 contributes to the dimethylallyl diphosphate binding site. Position 124 (His124) interacts with isopentenyl diphosphate. Residue Glu126 is the Proton donor of the active site. Thr168 is a binding site for (2E)-4-hydroxy-3-methylbut-2-enyl diphosphate. Cys198 serves as a coordination point for [4Fe-4S] cluster. Positions 226, 227, 228, and 270 each coordinate (2E)-4-hydroxy-3-methylbut-2-enyl diphosphate. The dimethylallyl diphosphate site is built by Ser226, Ser227, Asn228, and Ser270. Residues Ser226, Ser227, Asn228, and Ser270 each contribute to the isopentenyl diphosphate site.

It belongs to the IspH family. It depends on [4Fe-4S] cluster as a cofactor.

The enzyme catalyses isopentenyl diphosphate + 2 oxidized [2Fe-2S]-[ferredoxin] + H2O = (2E)-4-hydroxy-3-methylbut-2-enyl diphosphate + 2 reduced [2Fe-2S]-[ferredoxin] + 2 H(+). It catalyses the reaction dimethylallyl diphosphate + 2 oxidized [2Fe-2S]-[ferredoxin] + H2O = (2E)-4-hydroxy-3-methylbut-2-enyl diphosphate + 2 reduced [2Fe-2S]-[ferredoxin] + 2 H(+). The protein operates within isoprenoid biosynthesis; dimethylallyl diphosphate biosynthesis; dimethylallyl diphosphate from (2E)-4-hydroxy-3-methylbutenyl diphosphate: step 1/1. It functions in the pathway isoprenoid biosynthesis; isopentenyl diphosphate biosynthesis via DXP pathway; isopentenyl diphosphate from 1-deoxy-D-xylulose 5-phosphate: step 6/6. Catalyzes the conversion of 1-hydroxy-2-methyl-2-(E)-butenyl 4-diphosphate (HMBPP) into a mixture of isopentenyl diphosphate (IPP) and dimethylallyl diphosphate (DMAPP). Acts in the terminal step of the DOXP/MEP pathway for isoprenoid precursor biosynthesis. This Pseudomonas putida (strain GB-1) protein is 4-hydroxy-3-methylbut-2-enyl diphosphate reductase.